Reading from the N-terminus, the 219-residue chain is Leucyl/phenylalanyl-tRNA--protein transferase (219 aa).

Belongs to the L/F-transferase family.

The protein resides in the cytoplasm. It carries out the reaction N-terminal L-lysyl-[protein] + L-leucyl-tRNA(Leu) = N-terminal L-leucyl-L-lysyl-[protein] + tRNA(Leu) + H(+). The catalysed reaction is N-terminal L-arginyl-[protein] + L-leucyl-tRNA(Leu) = N-terminal L-leucyl-L-arginyl-[protein] + tRNA(Leu) + H(+). The enzyme catalyses L-phenylalanyl-tRNA(Phe) + an N-terminal L-alpha-aminoacyl-[protein] = an N-terminal L-phenylalanyl-L-alpha-aminoacyl-[protein] + tRNA(Phe). Its function is as follows. Functions in the N-end rule pathway of protein degradation where it conjugates Leu, Phe and, less efficiently, Met from aminoacyl-tRNAs to the N-termini of proteins containing an N-terminal arginine or lysine. This Leptospira interrogans serogroup Icterohaemorrhagiae serovar copenhageni (strain Fiocruz L1-130) protein is Leucyl/phenylalanyl-tRNA--protein transferase.